The following is a 419-amino-acid chain: tRNA (guanine-N(7)-)-methyltransferase non-catalytic subunit wuho (419 aa).

A compositionally biased stretch (low complexity) spans 51–61; that stretch reads STAEQQSAAAE. The disordered stretch occupies residues 51 to 75; it reads STAEQQSAAAETGGGSVVEGEEPKD. 3 WD repeats span residues 87-127, 174-213, and 217-255; these read APTV…AQLV, GHLS…DIHS, and GHKE…ELLR.

The protein belongs to the WD repeat TRM82 family. Forms a heterodimer with the catalytic subunit Mettl1. Interacts with mei-P26 and weakly interacts with bgcn; required for the function or formation of the mei-P26-bgcn-bam-sxl complex. Interacts with nanos; may be involved in mei-P26-dependent derepression of the BMP signaling pathway. Interacts with Myc; the interaction may be mediated by mei-P26 and may be involved in the regulation of ribosome biogenesis. In testis, it is present at high level in hub cells, a niche for germline stem cells of testis. Ubiquitously expressed in all testicular cells throughout spermatogenesis. Ubiquitously expressed in all germline and somatic cells of the ovary.

The protein localises to the nucleus. It localises to the cytoplasm. It functions in the pathway tRNA modification; N(7)-methylguanine-tRNA biosynthesis. Functionally, required for the Mettl1-dependent formation of N(7)-methylguanine at position 46 (m7G46) in tRNA. In the Mettl1-wuho methyltransferase complex, it is required to stabilize and induce conformational changes of the catalytic subunit. Required for binding of nanos mRNA and repression of translation by the mei-P26-bgcn-bam-sxl complex. May cooperate with mei-P26 and nanos to derepress the BMP signaling pathway. May cooperate with mei-P26 to suppress expression of a subset of microRNAs. May cooperate with mei-P26 to regulate bam expression levels in germline cells during gametogenesis. Required to promote mitosis to meiosis transition during gametogenesis. May regulate germline cell division in part by regulating ribosome biogenesis. The polypeptide is tRNA (guanine-N(7)-)-methyltransferase non-catalytic subunit wuho (Drosophila willistoni (Fruit fly)).